The chain runs to 172 residues: MKLFQLLLLVLTISSFIISNNGLVESHQGRMHRGSGERHHRAGGNQQQPQPPSEQQVESSYNSNDDGSSNSWWSATSWYGAGTTSWYSGGTTSNPVGTTTWYSGGTTSNPVGTTSWYSGGFGTYDSDSSSFSYENSSNETIVIYINPVTLVFTLVLLLTFIVLTITQSLRKY.

Positions 1-22 (MKLFQLLLLVLTISSFIISNNG) are cleaved as a signal peptide. Over 23 to 140 (LVESHQGRMH…FSYENSSNET (118 aa)) the chain is Extracellular. The disordered stretch occupies residues 27–69 (HQGRMHRGSGERHHRAGGNQQQPQPPSEQQVESSYNSNDDGSS). A compositionally biased stretch (basic residues) spans 29-42 (GRMHRGSGERHHRA). The span at 53–69 (SEQQVESSYNSNDDGSS) shows a compositional bias: low complexity. N-linked (GlcNAc...) asparagine glycosylation is found at Asn135 and Asn138. The chain crosses the membrane as a helical span at residues 141 to 161 (IVIYINPVTLVFTLVLLLTFI). Over 162–172 (VLTITQSLRKY) the chain is Cytoplasmic.

The protein resides in the membrane. This is an uncharacterized protein from Dictyostelium discoideum (Social amoeba).